The chain runs to 250 residues: MEANDQTQNIPAISFRSVRKSYKQDGQTYDVLQDVTGDIQQGAIVAVLGPSGSGKSTLLSMCNLMRTPDSGEVNIYGKEVREWNVNELRRTAALAFQSAPVLDGTVRDNLSLVQRLHQSQLYSPEKLASLAGLPPELLDRSARDLSGGQRQRLSLARTLSNPSSILLLDEITSALDPVSALEIEELIKRQHQEKKWTVMWVTHNMEQAKRIADTIWFMADGRLLEIAETDTFFSAPQHEAAKEFLKGGTR.

Residues 13–245 form the ABC transporter domain; it reads ISFRSVRKSY…PQHEAAKEFL (233 aa). ATP is bound at residue 49–56; it reads GPSGSGKS.

This sequence belongs to the ABC transporter superfamily.

The polypeptide is Putative ABC transporter ATP-binding protein YjkB (yjkB) (Bacillus subtilis (strain 168)).